The primary structure comprises 345 residues: NADPH dehydrogenase (345 aa).

23–26 (SPMC) contributes to the FMN binding site. Y28 is a substrate binding site. The FMN site is built by A60 and Q102. Residue 164–167 (HGAH) coordinates substrate. Residues R215 and 307-308 (GR) each bind FMN.

It belongs to the NADH:flavin oxidoreductase/NADH oxidase family. NamA subfamily. In terms of assembly, homotetramer. The cofactor is FMN.

The catalysed reaction is A + NADPH + H(+) = AH2 + NADP(+). Catalyzes the reduction of the double bond of an array of alpha,beta-unsaturated aldehydes and ketones. It also reduces the nitro group of nitroester and nitroaromatic compounds. It could have a role in detoxification processes. The protein is NADPH dehydrogenase of Bacillus cereus (strain B4264).